Reading from the N-terminus, the 84-residue chain is Small ribosomal subunit protein uS15 (84 aa).

It belongs to the universal ribosomal protein uS15 family. As to quaternary structure, part of the 30S ribosomal subunit. Forms a bridge to the 50S subunit in the 70S ribosome, contacting the 23S rRNA.

In terms of biological role, one of the primary rRNA binding proteins, it binds directly to 16S rRNA where it helps nucleate assembly of the platform of the 30S subunit by binding and bridging several RNA helices of the 16S rRNA. Functionally, forms an intersubunit bridge (bridge B4) with the 23S rRNA of the 50S subunit in the ribosome. This is Small ribosomal subunit protein uS15 from Thermosipho melanesiensis (strain DSM 12029 / CIP 104789 / BI429).